The primary structure comprises 171 residues: Cyclin-dependent kinase inhibitor 2A (171 aa).

Residues A33 to E42 show a composition bias toward basic and acidic residues. Positions A33–E52 are disordered. ANK repeat units follow at residues F45 to A74, F78 to T106, and T111 to V140.

This sequence belongs to the CDKN2 cyclin-dependent kinase inhibitor family. In terms of assembly, heterodimer with CDK4 or CDK6. Predominamt P16 complexes contained CDK6. Interacts with CDK4 (both 'T-172'-phosphorylated and non-phosphorylated forms); the interaction inhibits cyclin D-CDK4 kinase activity. Interacts with ISCO2. Expressed predominantly in lung and testis. In the testis, restricted to germ cells in the seminiferous epithelium. Not detected in premeiotic spermatogonia but high levels found in postmeiotic spermatids. In primary tumors, low levels detected in melanocytic hyperplasias. Higher levels found in non-metastatic and metastatic melanomas.

The protein localises to the cytoplasm. It is found in the nucleus. Its function is as follows. Acts as a negative regulator of the proliferation of normal cells by interacting strongly with CDK4 and CDK6. This inhibits their ability to interact with cyclins D and to phosphorylate the retinoblastoma protein. The chain is Cyclin-dependent kinase inhibitor 2A from Monodelphis domestica (Gray short-tailed opossum).